The primary structure comprises 553 residues: Solute carrier family 45 member 3 (553 aa).

A run of 11 helical transmembrane segments spans residues 19–39 (LLVN…ITYV), 52–72 (FMTM…PLLG), 88–108 (FIWA…RAGW), 120–140 (LELA…QVCF), 161–181 (FSVY…LPAI), 198–218 (CLFG…LFVT), 275–295 (FVAE…YTDF), 323–343 (MGSL…LVMD), 353–373 (SVYL…CLSH), 382–402 (AALT…LASL), and 522–542 (AYMV…TQVV).

It belongs to the glycoside-pentoside-hexuronide (GPH) cation symporter transporter (TC 2.A.2) family. Expressed in the epididymis. Primarily expressed in the prostate, but also in other tissues.

Its subcellular location is the membrane. The enzyme catalyses sucrose(out) + H(+)(out) = sucrose(in) + H(+)(in). Its function is as follows. Proton-associated sucrose transporter. May be able to transport also glucose and fructose. This is Solute carrier family 45 member 3 (Slc45a3) from Mus musculus (Mouse).